A 241-amino-acid polypeptide reads, in one-letter code: Uracil-DNA glycosylase (241 aa).

Asp-71 serves as the catalytic Proton acceptor.

The protein belongs to the uracil-DNA glycosylase (UDG) superfamily. UNG family.

The protein localises to the cytoplasm. The enzyme catalyses Hydrolyzes single-stranded DNA or mismatched double-stranded DNA and polynucleotides, releasing free uracil.. Excises uracil residues from the DNA which can arise as a result of misincorporation of dUMP residues by DNA polymerase or due to deamination of cytosine. The polypeptide is Uracil-DNA glycosylase (Xanthomonas campestris pv. campestris (strain 8004)).